The sequence spans 82 residues: Ranatensin (82 aa).

The first 27 residues, 1–27, serve as a signal peptide directing secretion; it reads MTTIPAIGILPIDFLTILLLFSFISHS. Positions 28–47 are excised as a propeptide; sequence VCVEFAEDAGELDKSNAFRR. Position 58 is a methionine amide (Met58). Residues 62 to 82 constitute a propeptide that is removed on maturation; sequence SLSDDTEQATMYSSRFVESTS.

This sequence belongs to the bombesin/neuromedin-B/ranatensin family. Expressed by the skin glands.

The protein localises to the secreted. This Lithobates pipiens (Northern leopard frog) protein is Ranatensin.